Here is a 210-residue protein sequence, read N- to C-terminus: Putative Dihydrofolate reductase (210 aa).

Positions 4–184 (TLYCVVAVDT…IFYMFETYIK (181 aa)) constitute a DHFR domain.

The protein belongs to the dihydrofolate reductase family.

It catalyses the reaction (6S)-5,6,7,8-tetrahydrofolate + NADP(+) = 7,8-dihydrofolate + NADPH + H(+). The polypeptide is Putative Dihydrofolate reductase (ORF2) (Human herpesvirus 8 type P (isolate GK18) (HHV-8)).